The primary structure comprises 336 residues: DNA polymerase III subunit delta' (336 aa).

DNA polymerase III contains a core (composed of alpha, epsilon and theta chains) that associates with a tau subunit. This core dimerizes to form the POLIII' complex. PolIII' associates with the gamma complex (composed of gamma, delta, delta', psi and chi chains) and with the beta chain to form the complete DNA polymerase III complex.

It catalyses the reaction DNA(n) + a 2'-deoxyribonucleoside 5'-triphosphate = DNA(n+1) + diphosphate. DNA polymerase III is a complex, multichain enzyme responsible for most of the replicative synthesis in bacteria. This DNA polymerase also exhibits 3' to 5' exonuclease activity. This is DNA polymerase III subunit delta' (holB) from Buchnera aphidicola subsp. Baizongia pistaciae (strain Bp).